Reading from the N-terminus, the 335-residue chain is BTB and MATH domain-containing protein 39 (335 aa).

Residues 14 to 141 (MKTLCFKIMN…NGVFTIEFDL (128 aa)) form the MATH domain. The 66-residue stretch at 161-226 (ADGKLIVEDQ…LQLDEFKVNV (66 aa)) folds into the BTB domain.

The protein is BTB and MATH domain-containing protein 39 of Caenorhabditis briggsae.